Here is a 243-residue protein sequence, read N- to C-terminus: UPF0280 protein Memar_1519 (243 aa).

The protein belongs to the UPF0280 family.

This is UPF0280 protein Memar_1519 from Methanoculleus marisnigri (strain ATCC 35101 / DSM 1498 / JR1).